The following is a 703-amino-acid chain: MIVKAEIGNQDPIYIEANKYAHQADSSILISQGGTKVLVTVCVSEEPLCGIDFAPLSVDYRERSFAWGKIPGGFIKREGKPTDREVLISRVIDRPLRPLMPKGFLNEVVVTCLTLSADDKYDPDVLAITGASAALVSSSVPFEGPIAGMRVCRVNGEFIINPTYEQRKNSDMDIVMALSKDAIVMVEGGAKEVEESVLLDALFFGLEKGQTLIKAQEELVDSLKPEKKPIGHIGLSDDMANKLKEIASSKILEAFSIEDKKERSKALKDVYAQAMQKLGISKEQEFDFLVSFKDLESQLMREQILKYKKRIDGRKETDIRPITIEMHPLERPHGSAVFTRGQTQALATVTLAPKDEAQLVETIFEGETFKRFMLHYNFPPFSTGEARPWGPPRRREIGHGALAERALEPLLAKEEDFPYIIRVVSDILESNGSSSMATVCAGSLALFDAGVPMKKHVAGIAMGLIKDGDNFVILTDILGDEDHLGDMDFKVAGTRDGVTSVQMDIKIKGLSKDIMIKALNQAKEARMFILDKLYEAIPEPNKEVSKYAPKAQVMKIPEDKVGLVIGPAGKNIKYIKEQFGASVWIDGANAYINAPTIEAVNKAADFINSLIQEVEVGGVYEGKVIRVENYGLFVEVLPGKVGLLHASAMTEKPTINVGDTIKVKVMAIDEQNRLNLCSPDYQKPENQERPRKEQLNRKPHHRK.

The Mg(2+) site is built by Asp482 and Asp488. One can recognise a KH domain in the interval 549–607 (PKAQVMKIPEDKVGLVIGPAGKNIKYIKEQFGASVWIDGANAYINAPTIEAVNKAADFI). The 63-residue stretch at 617–679 (GGVYEGKVIR…EQNRLNLCSP (63 aa)) folds into the S1 motif domain. The disordered stretch occupies residues 677–703 (CSPDYQKPENQERPRKEQLNRKPHHRK). A compositionally biased stretch (basic and acidic residues) spans 682–696 (QKPENQERPRKEQLN).

It belongs to the polyribonucleotide nucleotidyltransferase family. Mg(2+) serves as cofactor.

It localises to the cytoplasm. It carries out the reaction RNA(n+1) + phosphate = RNA(n) + a ribonucleoside 5'-diphosphate. Functionally, involved in mRNA degradation. Catalyzes the phosphorolysis of single-stranded polyribonucleotides processively in the 3'- to 5'-direction. The chain is Polyribonucleotide nucleotidyltransferase from Hydrogenobaculum sp. (strain Y04AAS1).